The following is a 130-amino-acid chain: Small ribosomal subunit protein uS9 (130 aa).

The protein belongs to the universal ribosomal protein uS9 family.

The protein is Small ribosomal subunit protein uS9 of Cupriavidus taiwanensis (strain DSM 17343 / BCRC 17206 / CCUG 44338 / CIP 107171 / LMG 19424 / R1) (Ralstonia taiwanensis (strain LMG 19424)).